A 459-amino-acid chain; its full sequence is Septin-4 (459 aa).

Phosphoserine occurs at positions 10, 49, 98, and 99. Disordered regions lie at residues 18–52 and 70–98; these read FVKD…SPDL and SQQY…PYDS. In terms of domain architecture, Septin-type G spans 122 to 395; that stretch reads KGFDFTLMVA…ENYRAQCIQS (274 aa). The tract at residues 132–139 is G1 motif; that stretch reads GESGLGKS. Residues 132–139 and Thr-166 each bind GTP; that span reads GESGLGKS. Positions 189-192 are G3 motif; it reads DTPG. The tract at residues 270–273 is G4 motif; the sequence is AKAD. GTP is bound at residue 271 to 279; that stretch reads KADTLTPSE. The residue at position 306 (Ser-306) is a Phosphoserine. Gly-329 and Arg-344 together coordinate GTP. Positions 410–430 are disordered; it reads TRESGTDFPIPAVPPGTDPET. Ser-413 carries the post-translational modification Phosphoserine. Thr-415 carries the post-translational modification Phosphothreonine. Residues 434–459 adopt a coiled-coil conformation; the sequence is IREKDEELRRMQEMLHKIQRQMKETH.

The protein belongs to the TRAFAC class TrmE-Era-EngA-EngB-Septin-like GTPase superfamily. Septin GTPase family. In terms of assembly, septins polymerize into heterooligomeric protein complexes that form filaments, and can associate with cellular membranes, actin filaments and microtubules. GTPase activity is required for filament formation. Interacts with SEPTIN8. Component of a septin core octameric complex consisting of SEPTIN12, SEPTIN7, SEPTIN6 and SEPTIN2 or SEPTIN4 in the order 12-7-6-2-2-6-7-12 or 12-7-6-4-4-6-7-12. Interacts with SEPTIN14 (via C-terminus). Interacts with DYRK1A. Interacts with SLC6A3/DAT and SNCA/alpha-synuclein. Interacts with STX1A; in the striatum. Interacts with XIAP (via BIR3 domain) following the induction of apoptosis. Interacts with AREL1 (via HECT domain); in the cytoplasm following induction of apoptosis. In terms of processing, phosphorylated by DYRK1A.

The protein resides in the cytoplasm. It localises to the cell projection. It is found in the cilium. The protein localises to the flagellum. Its subcellular location is the cytoplasmic vesicle. The protein resides in the secretory vesicle. It localises to the axon. It is found in the dendrite. The protein localises to the perikaryon. Functionally, filament-forming cytoskeletal GTPase. Pro-apoptotic protein involved in LGR5-positive intestinal stem cell and Paneth cell expansion in the intestines, via its interaction with XIAP. May also play a role in the regulation of cell fate in the intestine. Positive regulator of apoptosis involved in hematopoietic stem cell homeostasis; via its interaction with XIAP. Negative regulator of repair and hair follicle regeneration in response to injury, due to inhibition of hair follicle stem cell proliferation, potentially via its interaction with XIAP. Plays an important role in male fertility and sperm motility. During spermiogenesis, essential for the establishment of the annulus (a fibrous ring structure connecting the midpiece and the principal piece of the sperm flagellum) which is a requisite for the structural and mechanical integrity of the sperm. Involved in the migration of cortical neurons and the formation of neuron leading processes during embryonic development. Required for dopaminergic metabolism in presynaptic autoreceptors; potentially via activity as a presynaptic scaffold protein. This chain is Septin-4, found in Rattus norvegicus (Rat).